The following is a 264-amino-acid chain: Thymidylate synthase (264 aa).

R21 serves as a coordination point for dUMP. H51 contacts (6R)-5,10-methylene-5,6,7,8-tetrahydrofolate. Residue 126–127 (RR) coordinates dUMP. The active-site Nucleophile is C146. DUMP-binding positions include 166 to 169 (RSCD), N177, and 207 to 209 (HLY). Position 169 (D169) interacts with (6R)-5,10-methylene-5,6,7,8-tetrahydrofolate. A263 contacts (6R)-5,10-methylene-5,6,7,8-tetrahydrofolate.

It belongs to the thymidylate synthase family. Bacterial-type ThyA subfamily. As to quaternary structure, homodimer.

It is found in the cytoplasm. It catalyses the reaction dUMP + (6R)-5,10-methylene-5,6,7,8-tetrahydrofolate = 7,8-dihydrofolate + dTMP. It participates in pyrimidine metabolism; dTTP biosynthesis. Functionally, catalyzes the reductive methylation of 2'-deoxyuridine-5'-monophosphate (dUMP) to 2'-deoxythymidine-5'-monophosphate (dTMP) while utilizing 5,10-methylenetetrahydrofolate (mTHF) as the methyl donor and reductant in the reaction, yielding dihydrofolate (DHF) as a by-product. This enzymatic reaction provides an intracellular de novo source of dTMP, an essential precursor for DNA biosynthesis. This is Thymidylate synthase from Buchnera aphidicola subsp. Baizongia pistaciae (strain Bp).